Consider the following 176-residue polypeptide: Late embryogenesis abundant protein 49 (176 aa).

2 consecutive SMP domains span residues 49–106 (TTLT…RNQK) and 115–171 (NLGD…KLNH).

Belongs to the LEA type SMP family.

It localises to the cytoplasm. The protein resides in the nucleus. Functionally, LEA proteins are late embryonic proteins abundant in higher plant seed embryos. The function of those proteins is not known. The protein is Late embryogenesis abundant protein 49 of Arabidopsis thaliana (Mouse-ear cress).